An 899-amino-acid polypeptide reads, in one-letter code: MSQSCMFCPKDELPMEPKLPKGYEPHDVEAKWYEFWTENGLFHADENSPKNPFSIVIPPPNVTGVLHMGHALNNTLQDILARWKRMDGHEVLWQPGTDHAGIATQNVVEKQLAAEGSSRHDLGREGFVDRVWQWRTESGGQIINQLKRLGASCDWERERFTMDEGLSRAVREVFVTLYEEGLIYRDNRLINWCPRCHTALSDLEVEHQDQKGNLWHLRYPVVGTDRHLVVATTRPETMLGDTAVAVHPEDERYADLIGKFIMLPLMDRQIPIIADEYVDKEFGSGAVKITPAHDFNDFEIGKRHDLEFINIFDESGVVNGNGGRYQGLERFEARTRVLADLDAAGLLEQTEEHLNAVGECYRCKTVIEPYMSLQWYVNVQPLAEKAIEAVQTGQTRIIPQQWEKTYFEWMFNIRDWCISRQIWWGHRIPAWFCAACNEVTVSREDPTACSHCGATELRQETDVLDTWFSSALWPFSTMGWPDKTVALEKFYPTSCLVTGFDILFFWVARMMMMGLKFMGQVPFKDVYIHALVRDAQGQKMSKSKGNVIDPLTVIDEYGTDAFRFTLAAFAAQGRDVKLSVDRIAGYRNFVNKLWNASRFALMNLEDFDPSGIDLDDCQLTLAERWILTRLIDVAAETGKALEEYKFNEAASVLYAFTWHEFCDWYIELSKDDLYGEDAARKATSQAVLYTVLEQLLRLLHPLMPFVTEEIWQALPGERPAVSIMSAAFSTVSELPEDRQGASHMERIMDVIKGVRNIRGEMNVPPGKRIAAVLDCKTSKAAEVMAAGEGYIKSLARIDDLAFGVAVERPAQAATQVAGDIEILLPLAGLIDLDEEQKRLNKEIAKVEKDVLMFSKKLSNESFLAKAPAAVLEKDRQKLADAEEKLSILKQGLEKLAALQ.

Residues 60 to 70 (PNVTGVLHMGH) carry the 'HIGH' region motif. Positions 539 to 543 (KMSKS) match the 'KMSKS' region motif. Residue Lys542 coordinates ATP. A coiled-coil region spans residues 827 to 898 (AGLIDLDEEQ…KQGLEKLAAL (72 aa)).

The protein belongs to the class-I aminoacyl-tRNA synthetase family. ValS type 1 subfamily. Monomer.

The protein localises to the cytoplasm. The catalysed reaction is tRNA(Val) + L-valine + ATP = L-valyl-tRNA(Val) + AMP + diphosphate. Its function is as follows. Catalyzes the attachment of valine to tRNA(Val). As ValRS can inadvertently accommodate and process structurally similar amino acids such as threonine, to avoid such errors, it has a 'posttransfer' editing activity that hydrolyzes mischarged Thr-tRNA(Val) in a tRNA-dependent manner. This chain is Valine--tRNA ligase, found in Syntrophotalea carbinolica (strain DSM 2380 / NBRC 103641 / GraBd1) (Pelobacter carbinolicus).